The following is a 1412-amino-acid chain: MPN domain-containing protein CG4751 (1412 aa).

Residues 1–10 (MENGVEHGVD) are compositionally biased toward basic and acidic residues. Residues 1 to 123 (MENGVEHGVD…TKENYEGFNG (123 aa)) are disordered. Acidic residues-rich tracts occupy residues 23–35 (GEGD…EVEG) and 103–114 (SDAGDEDNDDET). The RAMA domain maps to 113-219 (ETKENYEGFN…AYKNTYLRKC (107 aa)). An MPN domain is found at 284–420 (ITVNSSALLL…LESVVKCIWI (137 aa)). Positions 361, 363, and 374 each coordinate Zn(2+). Disordered regions lie at residues 554–589 (INPP…QKAS), 669–734 (SALN…DIAR), 853–891 (GGSG…NSYK), 1027–1066 (SIPP…QQQQ), 1271–1318 (MKPP…NSGG), 1330–1376 (SSVP…SGGV), and 1389–1412 (LAAP…LSHD). Positions 572–600 (SGRKAEEESNAQAEQKASELKVMSLQEQL) form a coiled coil. Phosphoserine is present on residues Ser-699, Ser-701, Ser-705, Ser-719, Ser-723, and Ser-728. Polar residues predominate over residues 702 to 720 (PAKSDTSSHASTSRTRNSP). 2 stretches are compositionally biased toward low complexity: residues 873-891 (KSSS…NSYK) and 1036-1066 (SSGS…QQQQ). The span at 1275–1290 (KSTTPSSARTRESSAS) shows a compositional bias: polar residues. 2 positions are modified to phosphoserine: Ser-1288 and Ser-1290. Thr-1297 is subject to Phosphothreonine. A compositionally biased stretch (low complexity) spans 1360–1370 (LYGELAPPGAL).

Belongs to the peptidase M67 family.

Probable protease. This Drosophila melanogaster (Fruit fly) protein is MPN domain-containing protein CG4751.